Reading from the N-terminus, the 1143-residue chain is Condensin-2 complex subunit G2 (1143 aa).

Phosphoserine is present on S30. Residues 460 to 498 form an HEAT repeat; that stretch reads LLPALRYSLHDNSEKVRVAFVDMLLKIKAVRAAKFWKIC. Phosphothreonine is present on residues T805 and T1119.

Component of the condensin-2 complex, which contains the SMC2 and SMC4 heterodimer, and 3 non SMC subunits that probably regulate the complex: NCAPH2, NCAPD3 and NCAPG2.

Its subcellular location is the nucleus. Functionally, regulatory subunit of the condensin-2 complex, a complex which establishes mitotic chromosome architecture and is involved in physical rigidity of the chromatid axis. This is Condensin-2 complex subunit G2 (NCAPG2) from Homo sapiens (Human).